The following is a 469-amino-acid chain: 3-isopropylmalate dehydratase large subunit (469 aa).

3 residues coordinate [4Fe-4S] cluster: cysteine 349, cysteine 410, and cysteine 413.

The protein belongs to the aconitase/IPM isomerase family. LeuC type 1 subfamily. Heterodimer of LeuC and LeuD. Requires [4Fe-4S] cluster as cofactor.

It carries out the reaction (2R,3S)-3-isopropylmalate = (2S)-2-isopropylmalate. It participates in amino-acid biosynthesis; L-leucine biosynthesis; L-leucine from 3-methyl-2-oxobutanoate: step 2/4. Its function is as follows. Catalyzes the isomerization between 2-isopropylmalate and 3-isopropylmalate, via the formation of 2-isopropylmaleate. The polypeptide is 3-isopropylmalate dehydratase large subunit (Neisseria meningitidis serogroup C (strain 053442)).